A 436-amino-acid chain; its full sequence is Tol-Pal system protein TolB (436 aa).

Residues 1–19 (MVKCSLIRALMVVAGLVGA) form the signal peptide.

This sequence belongs to the TolB family. As to quaternary structure, the Tol-Pal system is composed of five core proteins: the inner membrane proteins TolA, TolQ and TolR, the periplasmic protein TolB and the outer membrane protein Pal. They form a network linking the inner and outer membranes and the peptidoglycan layer.

The protein resides in the periplasm. In terms of biological role, part of the Tol-Pal system, which plays a role in outer membrane invagination during cell division and is important for maintaining outer membrane integrity. The chain is Tol-Pal system protein TolB from Rhizobium etli (strain ATCC 51251 / DSM 11541 / JCM 21823 / NBRC 15573 / CFN 42).